The primary structure comprises 1394 residues: Ninein-like protein (1394 aa).

EF-hand domains lie at 8–43 (HYVS…LGLE) and 42–77 (LEEQ…VLSS). Disordered regions lie at residues 77–99 (SGSG…SCAV) and 126–166 (KYGS…KEPQ). The residue at position 149 (S149) is a Phosphoserine. Positions 151–166 (ESLKSDEDAESAKEPQ) are enriched in basic and acidic residues. EF-hand domains lie at 197–232 (TPEN…IGLH) and 234–269 (LEKQ…HEPP). Residues D247, D249, D251, R253, and E258 each contribute to the Ca(2+) site. Coiled coils occupy residues 382–423 (RQEL…MDDC), 461–515 (WEQA…DSEK), and 544–584 (EQFT…SRQS). Residues 494-496 (KEN) carry the KEN box motif. Positions 578-602 (LPRSRQSPAGTPGTHRRRIPGRGPA) are disordered. The short motif at 632–640 (RMQLETKVN) is the D-box element. A coiled-coil region spans residues 835-863 (EKEKLEQTYREQVEGLVQEADVLRALLKN). The span at 866-893 (TVVSDQQERTPSSMSLGPDSRQQPTARQ) shows a compositional bias: polar residues. Residues 866 to 977 (TVVSDQQERT…SARTLTGQGQ (112 aa)) are disordered. Positions 939–951 (RSSENLGVRDNHQ) are enriched in basic and acidic residues. 2 coiled-coil regions span residues 1057–1229 (SESE…ELTE) and 1269–1331 (GARV…LRKQ).

Interacts with gamma-tubulin and TUBGCP4. Interacts with anaphase promoting complex/cyclosome (APC/C). Interacts with CDC20 and FZR1. Interacts with LCA5 and USH2A. Post-translationally, phosphorylated by PLK1 which disrupts its centrosome association and interaction with gamma-tubulin. In terms of processing, ubiquitinated by the APC/C complex leading to its degradation.

It is found in the cytoplasm. It localises to the cytoskeleton. The protein resides in the microtubule organizing center. Its subcellular location is the centrosome. Involved in the microtubule organization in interphase cells. Overexpression induces the fragmentation of the Golgi, and causes lysosomes to disperse toward the cell periphery; it also interferes with mitotic spindle assembly. Involved in vesicle transport in photoreceptor cells. This is Ninein-like protein (Ninl) from Mus musculus (Mouse).